The following is a 473-amino-acid chain: Hyaluronidase-2 (473 aa).

An N-terminal signal peptide occupies residues 1–20; the sequence is MRAGLGPIITLALVLEVAWA. 2 disulfide bridges follow: C47–C340 and C211–C227. Residues N74 and N103 are each glycosylated (N-linked (GlcNAc...) asparagine). Catalysis depends on E135, which acts as the Proton donor. The N-linked (GlcNAc...) asparagine glycan is linked to N357. In terms of domain architecture, EGF-like spans 361-439; sequence ATQYCSWTQC…YLGWGGEQCQ (79 aa). Intrachain disulfides connect C365/C376, C370/C427, and C429/C438. D448 carries the GPI-anchor amidated aspartate lipid modification. The propeptide at 449-473 is removed in mature form; it reads ASRAWAGAHLASLLGLVAMTLTWTL.

The protein belongs to the glycosyl hydrolase 56 family. In terms of assembly, interacts with MST1R.

It localises to the cell membrane. The enzyme catalyses Random hydrolysis of (1-&gt;4)-linkages between N-acetyl-beta-D-glucosamine and D-glucuronate residues in hyaluronate.. Functionally, catalyzes hyaluronan degradation into small fragments that are endocytosed and degraded in lysosomes by HYAL1 and exoglycosidases. Essential for the breakdown of extracellular matrix hyaluronan. This is Hyaluronidase-2 (Hyal2) from Rattus norvegicus (Rat).